Here is a 405-residue protein sequence, read N- to C-terminus: Tryptophan synthase beta chain (405 aa).

Position 95 is an N6-(pyridoxal phosphate)lysine (lysine 95).

The protein belongs to the TrpB family. In terms of assembly, tetramer of two alpha and two beta chains. Pyridoxal 5'-phosphate is required as a cofactor.

It carries out the reaction (1S,2R)-1-C-(indol-3-yl)glycerol 3-phosphate + L-serine = D-glyceraldehyde 3-phosphate + L-tryptophan + H2O. Its pathway is amino-acid biosynthesis; L-tryptophan biosynthesis; L-tryptophan from chorismate: step 5/5. Functionally, the beta subunit is responsible for the synthesis of L-tryptophan from indole and L-serine. The polypeptide is Tryptophan synthase beta chain (Pseudomonas putida (strain ATCC 700007 / DSM 6899 / JCM 31910 / BCRC 17059 / LMG 24140 / F1)).